Consider the following 150-residue polypeptide: Ribosome maturation factor RimP (150 aa).

Belongs to the RimP family.

Its subcellular location is the cytoplasm. Its function is as follows. Required for maturation of 30S ribosomal subunits. The polypeptide is Ribosome maturation factor RimP (Methylococcus capsulatus (strain ATCC 33009 / NCIMB 11132 / Bath)).